We begin with the raw amino-acid sequence, 336 residues long: Retinol dehydrogenase 14 (336 aa).

T5 is modified (phosphothreonine). NADP(+) is bound at residue 50–56; that stretch reads GANSGLG. Residue S192 participates in substrate binding. The active-site Proton acceptor is the Y217.

The protein belongs to the short-chain dehydrogenases/reductases (SDR) family. Widely expressed.

It catalyses the reaction all-trans-retinol + NADP(+) = all-trans-retinal + NADPH + H(+). The catalysed reaction is 9-cis-retinol + NADP(+) = 9-cis-retinal + NADPH + H(+). It carries out the reaction 11-cis-retinol + NADP(+) = 11-cis-retinal + NADPH + H(+). It functions in the pathway cofactor metabolism; retinol metabolism. Its function is as follows. Retinol dehydrogenase with a clear preference for NADP. Displays high activity towards 9-cis, 11-cis and all-trans-retinol. Shows a very weak activity towards 13-cis-retinol. Has no activity towards steroid. This chain is Retinol dehydrogenase 14 (RDH14), found in Homo sapiens (Human).